We begin with the raw amino-acid sequence, 178 residues long: Lipid A deacylase PagL (178 aa).

The signal sequence occupies residues 1–19; sequence MQFLKKNKPLFGIVTLALA. Catalysis depends on charge relay system residues histidine 154, serine 156, and aspartate 168.

Belongs to the PagL family. Homodimer.

Its subcellular location is the cell outer membrane. It catalyses the reaction a 3-(acyloxy)acyl derivative of bacterial toxin + H2O = a 3-hydroxyacyl derivative of bacterial toxin + a fatty acid + H(+). Has lipid A 3-O-deacylase activity. Hydrolyzes the ester bond at the 3 position of lipid A, a bioactive component of lipopolysaccharide (LPS), thereby releasing the primary fatty acyl moiety. The protein is Lipid A deacylase PagL of Bordetella bronchiseptica (strain ATCC BAA-588 / NCTC 13252 / RB50) (Alcaligenes bronchisepticus).